The following is a 47-amino-acid chain: Bifunctional chitinase/lysozyme (47 aa).

One can recognise a GH18 domain in the interval 1–47; that stretch reads GGIAIYWGQNGNEGTLTQTCNTGKYSYVNIAFLNKFGNGQTPEINLA.

This sequence belongs to the glycosyl hydrolase 18 family. Chitinase class II subfamily.

The protein localises to the secreted. It is found in the extracellular space. It carries out the reaction Random endo-hydrolysis of N-acetyl-beta-D-glucosaminide (1-&gt;4)-beta-linkages in chitin and chitodextrins.. It catalyses the reaction Hydrolysis of (1-&gt;4)-beta-linkages between N-acetylmuramic acid and N-acetyl-D-glucosamine residues in a peptidoglycan and between N-acetyl-D-glucosamine residues in chitodextrins.. Functionally, bifunctional enzyme with lysozyme/chitinase activity. This is Bifunctional chitinase/lysozyme from Parthenocissus quinquefolia (Virginia creeper).